The following is a 515-amino-acid chain: NAD(P)H-quinone oxidoreductase subunit 2 (515 aa).

Transmembrane regions (helical) follow at residues 14–34, 42–62, 79–99, 109–128, 132–151, 167–187, 206–226, 240–260, 274–294, 302–322, 330–350, 374–394, 396–416, and 462–482; these read TILP…ADLI, WTPY…IPLW, LSLF…LMSI, LGEF…FIAG, LVFI…LLTG, LLIG…LYGL, LGLV…ISAV, PTPV…ALAI, WQLI…VVAL, MLAY…VVGT, LFYL…VILF, LGLS…GFFG, IYLF…LGLL, and VGLV…NPLF.

This sequence belongs to the complex I subunit 2 family. In terms of assembly, NDH-1 can be composed of about 15 different subunits; different subcomplexes with different compositions have been identified which probably have different functions.

It is found in the cellular thylakoid membrane. The catalysed reaction is a plastoquinone + NADH + (n+1) H(+)(in) = a plastoquinol + NAD(+) + n H(+)(out). It carries out the reaction a plastoquinone + NADPH + (n+1) H(+)(in) = a plastoquinol + NADP(+) + n H(+)(out). Its function is as follows. NDH-1 shuttles electrons from an unknown electron donor, via FMN and iron-sulfur (Fe-S) centers, to quinones in the respiratory and/or the photosynthetic chain. The immediate electron acceptor for the enzyme in this species is believed to be plastoquinone. Couples the redox reaction to proton translocation, and thus conserves the redox energy in a proton gradient. Cyanobacterial NDH-1 also plays a role in inorganic carbon-concentration. The chain is NAD(P)H-quinone oxidoreductase subunit 2 from Thermosynechococcus vestitus (strain NIES-2133 / IAM M-273 / BP-1).